The sequence spans 272 residues: Shikimate dehydrogenase (NADP(+)) (272 aa).

Shikimate-binding positions include 14–16 (SKS) and T61. K65 serves as the catalytic Proton acceptor. Position 77 (E77) interacts with NADP(+). Positions 86 and 102 each coordinate shikimate. NADP(+) is bound by residues 126 to 130 (GAGGA), 149 to 154 (NRTYSR), and M213. Y215 is a binding site for shikimate. Position 237 (G237) interacts with NADP(+).

This sequence belongs to the shikimate dehydrogenase family. As to quaternary structure, homodimer.

It catalyses the reaction shikimate + NADP(+) = 3-dehydroshikimate + NADPH + H(+). Its pathway is metabolic intermediate biosynthesis; chorismate biosynthesis; chorismate from D-erythrose 4-phosphate and phosphoenolpyruvate: step 4/7. Functionally, involved in the biosynthesis of the chorismate, which leads to the biosynthesis of aromatic amino acids. Catalyzes the reversible NADPH linked reduction of 3-dehydroshikimate (DHSA) to yield shikimate (SA). This chain is Shikimate dehydrogenase (NADP(+)), found in Enterobacter sp. (strain 638).